The chain runs to 219 residues: Proteasome subunit beta type-9 (219 aa).

A propeptide spans 1–20 (removed in mature form); that stretch reads MLRAGAPTGDLPRAGEVHTG. Thr21 acts as the Nucleophile in catalysis. N6-acetyllysine is present on residues Lys53 and Lys109.

It belongs to the peptidase T1B family. As to quaternary structure, the 26S proteasome consists of a 20S proteasome core and two 19S regulatory subunits. The 20S proteasome core is composed of 28 subunits that are arranged in four stacked rings, resulting in a barrel-shaped structure. The two end rings are each formed by seven alpha subunits, and the two central rings are each formed by seven beta subunits. The catalytic chamber with the active sites is on the inside of the barrel. Component of the immunoproteasome, where it displaces the equivalent housekeeping subunit PSMB6. Component of the spermatoproteasome, a form of the proteasome specifically found in testis. In terms of assembly, (Microbial infection) Interacts with HIV-1 TAT protein. In terms of processing, autocleaved. The resulting N-terminal Thr residue of the mature subunit is responsible for the nucleophile proteolytic activity.

Its subcellular location is the cytoplasm. The protein localises to the nucleus. The catalysed reaction is Cleavage of peptide bonds with very broad specificity.. Its function is as follows. The proteasome is a multicatalytic proteinase complex which is characterized by its ability to cleave peptides with Arg, Phe, Tyr, Leu, and Glu adjacent to the leaving group at neutral or slightly basic pH. The proteasome has an ATP-dependent proteolytic activity. This subunit is involved in antigen processing to generate class I binding peptides. Replacement of PSMB6 by PSMB9 increases the capacity of the immunoproteasome to cleave model peptides after hydrophobic and basic residues. The polypeptide is Proteasome subunit beta type-9 (PSMB9) (Homo sapiens (Human)).